Reading from the N-terminus, the 625-residue chain is Sorting nexin-41 (625 aa).

The interval 1-90 (MDYNIFEAVH…STSSHAVVEA (90 aa)) is disordered. Positions 54-86 (SPPSSSSLPSSPAHSSSAGSSRASTSSSTSSHA) are enriched in low complexity. Residues 98-235 (VSLSMSTTAT…QKFLNPEFNW (138 aa)) form the PX domain. A 1,2-diacyl-sn-glycero-3-phospho-(1D-myo-inositol-3-phosphate) is bound by residues R153, S155, K179, and R202. Coiled coils occupy residues 437-469 (QFKILERLIIEKETKLSSLTEIENQLQKINESL) and 539-563 (QLTEQERSKQIKQLNQDLSKLKDCL).

It belongs to the sorting nexin family. Binds to SNX4.

It is found in the prevacuolar compartment. Its subcellular location is the endosome. It localises to the endosome membrane. Involved in proper sorting of the v-SNARE protein SNC1. This chain is Sorting nexin-41 (SNX41), found in Saccharomyces cerevisiae (strain ATCC 204508 / S288c) (Baker's yeast).